A 160-amino-acid chain; its full sequence is Cytochrome b6-f complex subunit 4 (160 aa).

Transmembrane regions (helical) follow at residues 36–56, 95–115, and 127–147; these read ILYM…GLSI, LVGV…PFIE, and PIAT…GIGA.

The protein belongs to the cytochrome b family. PetD subfamily. As to quaternary structure, the 4 large subunits of the cytochrome b6-f complex are cytochrome b6, subunit IV (17 kDa polypeptide, petD), cytochrome f and the Rieske protein, while the 4 small subunits are petG, petL, petM and petN. The complex functions as a dimer.

The protein resides in the plastid. Its subcellular location is the chloroplast thylakoid membrane. Its function is as follows. Component of the cytochrome b6-f complex, which mediates electron transfer between photosystem II (PSII) and photosystem I (PSI), cyclic electron flow around PSI, and state transitions. This Gracilaria tenuistipitata var. liui (Red alga) protein is Cytochrome b6-f complex subunit 4.